A 386-amino-acid chain; its full sequence is 8-amino-7-oxononanoate synthase (386 aa).

Residue Arg31 participates in substrate binding. 109–110 (GY) provides a ligand contact to pyridoxal 5'-phosphate. Residue His134 participates in substrate binding. Residues Ser180, 205 to 208 (DEAH), and 236 to 239 (TLSK) contribute to the pyridoxal 5'-phosphate site. N6-(pyridoxal phosphate)lysine is present on Lys239. Thr349 is a binding site for substrate.

This sequence belongs to the class-II pyridoxal-phosphate-dependent aminotransferase family. BioF subfamily. Homodimer. The cofactor is pyridoxal 5'-phosphate.

The catalysed reaction is 6-carboxyhexanoyl-[ACP] + L-alanine + H(+) = (8S)-8-amino-7-oxononanoate + holo-[ACP] + CO2. It participates in cofactor biosynthesis; biotin biosynthesis. Its function is as follows. Catalyzes the decarboxylative condensation of pimeloyl-[acyl-carrier protein] and L-alanine to produce 8-amino-7-oxononanoate (AON), [acyl-carrier protein], and carbon dioxide. The chain is 8-amino-7-oxononanoate synthase from Mycobacterium bovis (strain ATCC BAA-935 / AF2122/97).